A 529-amino-acid polypeptide reads, in one-letter code: Glycerol kinase 5 (529 aa).

Thr-22 and Thr-23 together coordinate ATP. 3 residues coordinate glycerol: Arg-92, Asp-269, and Gln-270. ATP contacts are provided by Thr-291, Gly-334, and Gly-434.

The protein belongs to the FGGY kinase family.

The protein resides in the cytoplasm. It catalyses the reaction glycerol + ATP = sn-glycerol 3-phosphate + ADP + H(+). The protein operates within polyol metabolism; glycerol degradation via glycerol kinase pathway; sn-glycerol 3-phosphate from glycerol: step 1/1. Its function is as follows. Skin-specific kinase that plays a key role in glycerol metabolism, catalyzing its phosphorylation to produce sn-glycerol 3-phosphate. Involved in skin-specific regulation of sterol regulatory element-binding protein (SREBP) processing and lipid biosynthesis. The chain is Glycerol kinase 5 (gk5) from Danio rerio (Zebrafish).